The sequence spans 428 residues: Histidine--tRNA ligase (428 aa).

The protein belongs to the class-II aminoacyl-tRNA synthetase family. In terms of assembly, homodimer.

The protein resides in the cytoplasm. The catalysed reaction is tRNA(His) + L-histidine + ATP = L-histidyl-tRNA(His) + AMP + diphosphate + H(+). This chain is Histidine--tRNA ligase, found in Chlamydia trachomatis serovar L2 (strain ATCC VR-902B / DSM 19102 / 434/Bu).